Here is a 292-residue protein sequence, read N- to C-terminus: 4-diphosphocytidyl-2-C-methyl-D-erythritol kinase (292 aa).

Residue Lys-13 is part of the active site. 97–107 (PVAAGLAGGSS) provides a ligand contact to ATP. Residue Asp-139 is part of the active site.

It belongs to the GHMP kinase family. IspE subfamily.

It catalyses the reaction 4-CDP-2-C-methyl-D-erythritol + ATP = 4-CDP-2-C-methyl-D-erythritol 2-phosphate + ADP + H(+). Its pathway is isoprenoid biosynthesis; isopentenyl diphosphate biosynthesis via DXP pathway; isopentenyl diphosphate from 1-deoxy-D-xylulose 5-phosphate: step 3/6. In terms of biological role, catalyzes the phosphorylation of the position 2 hydroxy group of 4-diphosphocytidyl-2C-methyl-D-erythritol. This chain is 4-diphosphocytidyl-2-C-methyl-D-erythritol kinase, found in Bacillus thuringiensis (strain Al Hakam).